The primary structure comprises 359 residues: Guanine nucleotide-binding protein subunit alpha-11 (359 aa).

S-palmitoyl cysteine attachment occurs at residues cysteine 9 and cysteine 10. Residues 38 to 359 (RELKLLLLGT…QLNLKEYNLV (322 aa)) enclose the G-alpha domain. The tract at residues 41 to 54 (KLLLLGTGESGKST) is G1 motif. GTP is bound by residues 46–53 (GTGESGKS) and 180–183 (LRVR). Serine 53 contacts Mg(2+). A G2 motif region spans residues 178–186 (DVLRVRVPT). Threonine 186 is a Mg(2+) binding site. Residues 201 to 210 (FRMVDVGGQR) form a G3 motif region. A G4 motif region spans residues 270 to 277 (ILFLNKKD). GTP-binding positions include 274-277 (NKKD) and alanine 331. The segment at 329-334 (TCATDT) is G5 motif.

Belongs to the G-alpha family. G(q) subfamily. As to quaternary structure, g proteins are composed of 3 units; alpha, beta and gamma. The alpha chain contains the guanine nucleotide binding site. Interacts with RGS22. Interacts with NTSR1.

It localises to the cell membrane. It is found in the cytoplasm. It catalyses the reaction GTP + H2O = GDP + phosphate + H(+). Its function is as follows. Guanine nucleotide-binding proteins (G proteins) function as transducers downstream of G protein-coupled receptors (GPCRs) in numerous signaling cascades. The alpha chain contains the guanine nucleotide binding site and alternates between an active, GTP-bound state and an inactive, GDP-bound state. Signaling by an activated GPCR promotes GDP release and GTP binding. The alpha subunit has a low GTPase activity that converts bound GTP to GDP, thereby terminating the signal. Both GDP release and GTP hydrolysis are modulated by numerous regulatory proteins. Signaling is mediated via phospholipase C-beta-dependent inositol lipid hydrolysis for signal propagation: activates phospholipase C-beta: following GPCR activation, GNA11 activates PLC-beta (PLCB1, PLCB2, PLCB3 or PLCB4), leading to production of diacylglycerol (DAG) and inositol 1,4,5-trisphosphate (IP3). Transduces FFAR4 signaling in response to long-chain fatty acids (LCFAs). Together with GNAQ, required for heart development. In the respiratory epithelium, transmits OXGR1-dependent signals that lead to downstream intracellular Ca(2+) release and mucocilliary clearance of airborne pathogens. The polypeptide is Guanine nucleotide-binding protein subunit alpha-11 (GNA11) (Bos taurus (Bovine)).